Reading from the N-terminus, the 119-residue chain is Large ribosomal subunit protein uL18 (119 aa).

This sequence belongs to the universal ribosomal protein uL18 family. In terms of assembly, part of the 50S ribosomal subunit; part of the 5S rRNA/L5/L18/L25 subcomplex. Contacts the 5S and 23S rRNAs.

In terms of biological role, this is one of the proteins that bind and probably mediate the attachment of the 5S RNA into the large ribosomal subunit, where it forms part of the central protuberance. This is Large ribosomal subunit protein uL18 from Jannaschia sp. (strain CCS1).